Here is a 603-residue protein sequence, read N- to C-terminus: Sulfoacetaldehyde acetyltransferase (603 aa).

This sequence belongs to the TPP enzyme family. In terms of assembly, homodimer or homotetramer. Mg(2+) is required as a cofactor. It depends on thiamine diphosphate as a cofactor.

The protein localises to the cytoplasm. The enzyme catalyses acetyl phosphate + sulfite + H(+) = sulfoacetaldehyde + phosphate. It participates in organosulfur degradation; taurine degradation via aerobic pathway; acetyl phosphate and sulfite from taurine: step 2/2. In Alcaligenes xylosoxydans xylosoxydans (Achromobacter xylosoxidans), this protein is Sulfoacetaldehyde acetyltransferase (xsc).